We begin with the raw amino-acid sequence, 168 residues long: Photosystem I assembly protein Ycf3 (168 aa).

TPR repeat units lie at residues Ala-35–Pro-68, Ser-72–Leu-105, and Gly-120–Asn-153.

The protein belongs to the Ycf3 family.

Its subcellular location is the plastid. The protein resides in the chloroplast thylakoid membrane. In terms of biological role, essential for the assembly of the photosystem I (PSI) complex. May act as a chaperone-like factor to guide the assembly of the PSI subunits. This chain is Photosystem I assembly protein Ycf3, found in Chloranthus spicatus (Chulantree).